A 519-amino-acid polypeptide reads, in one-letter code: LysM domain-containing protein ARB_03442 (519 aa).

The signal sequence occupies residues 1 to 19; the sequence is MGQLKQLAGILALASPAIA. Asn47 carries an N-linked (GlcNAc...) asparagine glycan. The LysM domain maps to 312 to 358; sequence KYYNVVAGDTCASISSEFEVTMDELLTYNPELHPNCENLWANFAICV. Residues 314-358 form a lysM domain region; the sequence is YNVVAGDTCASISSEFEVTMDELLTYNPELHPNCENLWANFAICV. Positions 407-416 are enriched in low complexity; it reads PDAPDAQGQT. The segment at 407–458 is disordered; that stretch reads PDAPDAQGQTVHDDEPPEEPHIEEPPKDIPAGDDDDRKKAKLPLPSGKYPLP. Residues 417–433 are compositionally biased toward basic and acidic residues; the sequence is VHDDEPPEEPHIEEPPK. Residue Asn460 is glycosylated (N-linked (GlcNAc...) asparagine). Residues 467–510 enclose the Chitin-binding type-1 domain; sequence DGSCNEYISCVGSPFGVCCSTSGWCGYGKPWCGVGNCVSGYCDT. 4 cysteine pairs are disulfide-bonded: Cys470/Cys485, Cys476/Cys491, Cys484/Cys498, and Cys503/Cys508.

Its subcellular location is the secreted. Functionally, might have a role in sequestration of chitin oligosaccharides (breakdown products of fungal cell walls that are released during invasion and act as triggers of host immunity) to dampen host defense. The sequence is that of LysM domain-containing protein ARB_03442 from Arthroderma benhamiae (strain ATCC MYA-4681 / CBS 112371) (Trichophyton mentagrophytes).